A 455-amino-acid chain; its full sequence is MSFRSIVRDVRDSIGSLSRRSFDFKLSSLNKEGGKSRGSVQDSHEEQLVVTIQETPWANLPPELLRDVIKRLEESESVWPARRHVVACASVCRSWRDMCKEIVQSPELSGKITFPVSLKQPGPRDATMQCFIKRDKSNLTYHLYLCLSPALLVENGKFLLSAKRIRRTTYTEYVISMHADTISRSSNTYIGKIRSNFLGTKFIIYDTQPAYNSNIARAVQPVGLSRRFYSKRVSPKVPSGSYKIAQVSYELNVLGTRGPRRMHCAMNSIPASSLAEGGTVPGQPDIIVPRSILDESFRSITSSSSRKITYDYSNDFSSARFSDILGPLSEDQEVVLEEGKERNSPPLVLKNKPPRWHEQLQCWCLNFRGRVTVASVKNFQLIAANQPQPQPQPQPQPQPLTQPQPSGQTDGPDKIILQFGKVGKDMFTMDFRYPLSAFQAFAICLSSFDTKLACE.

An F-box domain is found at 54 to 112 (ETPWANLPPELLRDVIKRLEESESVWPARRHVVACASVCRSWRDMCKEIVQSPELSGKI). The tract at residues 386 to 414 (QPQPQPQPQPQPQPLTQPQPSGQTDGPDK) is disordered. The span at 388–402 (QPQPQPQPQPQPLTQ) shows a compositional bias: pro residues.

This sequence belongs to the TUB family. Ubiquitous.

This chain is Tubby-like F-box protein 1, found in Arabidopsis thaliana (Mouse-ear cress).